Consider the following 1192-residue polypeptide: Protein argonaute 13 (1192 aa).

In terms of domain architecture, PAZ spans 183–296 (TVIQFVEEFL…LPMEVCKIVE (114 aa)). Residues 472-770 (LLIVILLEVS…AASHAHCCIK (299 aa)) enclose the Piwi domain.

The protein belongs to the argonaute family. Ago subfamily.

Functionally, probably involved in the RNA silencing pathway. May bind to short RNAs such as microRNAs (miRNAs) or short interfering RNAs (siRNAs), and represses the translation of mRNAs which are complementary to them. The chain is Protein argonaute 13 (AGO13) from Oryza sativa subsp. japonica (Rice).